The following is a 107-amino-acid chain: Probable antitoxin TacA (107 aa).

Belongs to the TacA antitoxin family. As to quaternary structure, forms a complex with cognate antitoxin TacT.

Functionally, probable antitoxin component of a type II toxin-antitoxin (TA) system. Should neutralize cognate toxin TacT (y4aS). This is Probable antitoxin TacA from Sinorhizobium fredii (strain NBRC 101917 / NGR234).